We begin with the raw amino-acid sequence, 281 residues long: Ribosomal RNA small subunit methyltransferase A (281 aa).

S-adenosyl-L-methionine is bound by residues N35, L37, G62, E83, D107, and N125.

Belongs to the class I-like SAM-binding methyltransferase superfamily. rRNA adenine N(6)-methyltransferase family. RsmA subfamily.

It localises to the cytoplasm. It catalyses the reaction adenosine(1518)/adenosine(1519) in 16S rRNA + 4 S-adenosyl-L-methionine = N(6)-dimethyladenosine(1518)/N(6)-dimethyladenosine(1519) in 16S rRNA + 4 S-adenosyl-L-homocysteine + 4 H(+). Its function is as follows. Specifically dimethylates two adjacent adenosines (A1518 and A1519) in the loop of a conserved hairpin near the 3'-end of 16S rRNA in the 30S particle. May play a critical role in biogenesis of 30S subunits. The chain is Ribosomal RNA small subunit methyltransferase A from Deinococcus geothermalis (strain DSM 11300 / CIP 105573 / AG-3a).